Consider the following 115-residue polypeptide: U3-lycotoxin-Ls1a (115 aa).

The signal sequence occupies residues 1-20 (MKFVLLFGVLLVTLFSYSSA). The propeptide occupies 21–44 (EMLDDFDQADEDELLSSIEKEEAR). Intrachain disulfides connect C48–C63, C55–C72, C62–C87, and C74–C85.

This sequence belongs to the neurotoxin 19 (CSTX) family. 01 subfamily. In terms of tissue distribution, expressed by the venom gland.

Its subcellular location is the secreted. This is U3-lycotoxin-Ls1a from Lycosa singoriensis (Wolf spider).